A 489-amino-acid chain; its full sequence is Rhamnulokinase (489 aa).

13–17 contributes to the ATP binding site; it reads ASSGR. The cysteines at positions 68 and 222 are disulfide-linked. Residues glycine 83 and 236–238 each bind substrate; that span reads HDT. The active-site Proton acceptor is aspartate 237. Residue threonine 259 participates in ATP binding. Position 296 (asparagine 296) interacts with substrate. Glutamine 304 contacts ATP. A disulfide bond links cysteine 353 and cysteine 370. Glycine 402 provides a ligand contact to ATP. Cysteine 413 and cysteine 417 are disulfide-bonded.

The protein belongs to the rhamnulokinase family. The cofactor is Mg(2+).

The enzyme catalyses L-rhamnulose + ATP = L-rhamnulose 1-phosphate + ADP + H(+). Its pathway is carbohydrate degradation; L-rhamnose degradation; glycerone phosphate from L-rhamnose: step 2/3. In terms of biological role, involved in the catabolism of L-rhamnose (6-deoxy-L-mannose). Catalyzes the transfer of the gamma-phosphate group from ATP to the 1-hydroxyl group of L-rhamnulose to yield L-rhamnulose 1-phosphate. The chain is Rhamnulokinase from Salmonella paratyphi A (strain AKU_12601).